Here is an 86-residue protein sequence, read N- to C-terminus: Small ribosomal subunit protein eS27 (86 aa).

Residues 39-61 (CQGCFNITTVFSHSQTVVVCPGC) form a C4-type zinc finger.

This sequence belongs to the eukaryotic ribosomal protein eS27 family. Zn(2+) is required as a cofactor.

In Hordeum vulgare (Barley), this protein is Small ribosomal subunit protein eS27 (RPS27).